Reading from the N-terminus, the 222-residue chain is Germin-like protein subfamily 1 member 4 (222 aa).

The signal sequence occupies residues 1 to 24 (MEGLLQFLLAKIILLALASSFVYC). C34 and C50 are joined by a disulfide. An N-linked (GlcNAc...) asparagine glycan is attached at N38. A Cupin type-1 domain is found at 64–215 (SGLNVPGNTI…AFALDYNKVK (152 aa)). Residues H112 and H114 each contribute to the Mn(2+) site. Residue N139 is glycosylated (N-linked (GlcNAc...) asparagine). H161 serves as a coordination point for Mn(2+).

Belongs to the germin family. In terms of assembly, oligomer (believed to be a pentamer but probably hexamer).

The protein localises to the secreted. Its subcellular location is the extracellular space. The protein resides in the apoplast. Functionally, may play a role in plant defense. Probably has no oxalate oxidase activity even if the active site is conserved. The chain is Germin-like protein subfamily 1 member 4 from Arabidopsis thaliana (Mouse-ear cress).